The sequence spans 172 residues: Cytidylate kinase (172 aa).

7-15 provides a ligand contact to ATP; it reads GPPGSGTST.

The protein belongs to the cytidylate kinase family. Type 2 subfamily.

The protein resides in the cytoplasm. It carries out the reaction CMP + ATP = CDP + ADP. It catalyses the reaction dCMP + ATP = dCDP + ADP. This chain is Cytidylate kinase, found in Methanothrix thermoacetophila (strain DSM 6194 / JCM 14653 / NBRC 101360 / PT) (Methanosaeta thermophila).